The primary structure comprises 274 residues: Large ribosomal subunit protein uL2 (274 aa).

Positions Val195 to Lys274 are disordered. Basic residues-rich tracts occupy residues Gly209–Asn220 and Pro244–Ser264.

Belongs to the universal ribosomal protein uL2 family. As to quaternary structure, part of the 50S ribosomal subunit. Forms a bridge to the 30S subunit in the 70S ribosome.

Its function is as follows. One of the primary rRNA binding proteins. Required for association of the 30S and 50S subunits to form the 70S ribosome, for tRNA binding and peptide bond formation. It has been suggested to have peptidyltransferase activity; this is somewhat controversial. Makes several contacts with the 16S rRNA in the 70S ribosome. The protein is Large ribosomal subunit protein uL2 of Bacteroides fragilis (strain ATCC 25285 / DSM 2151 / CCUG 4856 / JCM 11019 / LMG 10263 / NCTC 9343 / Onslow / VPI 2553 / EN-2).